Reading from the N-terminus, the 154-residue chain is 6,7-dimethyl-8-ribityllumazine synthase (154 aa).

Residues phenylalanine 22, 56–58 (AFE), and 80–82 (AVI) each bind 5-amino-6-(D-ribitylamino)uracil. 85–86 (AT) contributes to the (2S)-2-hydroxy-3-oxobutyl phosphate binding site. The Proton donor role is filled by histidine 88. A 5-amino-6-(D-ribitylamino)uracil-binding site is contributed by phenylalanine 113. Position 127 (arginine 127) interacts with (2S)-2-hydroxy-3-oxobutyl phosphate.

Belongs to the DMRL synthase family. In terms of assembly, forms an icosahedral capsid composed of 60 subunits, arranged as a dodecamer of pentamers.

It carries out the reaction (2S)-2-hydroxy-3-oxobutyl phosphate + 5-amino-6-(D-ribitylamino)uracil = 6,7-dimethyl-8-(1-D-ribityl)lumazine + phosphate + 2 H2O + H(+). The protein operates within cofactor biosynthesis; riboflavin biosynthesis; riboflavin from 2-hydroxy-3-oxobutyl phosphate and 5-amino-6-(D-ribitylamino)uracil: step 1/2. Its function is as follows. Catalyzes the formation of 6,7-dimethyl-8-ribityllumazine by condensation of 5-amino-6-(D-ribitylamino)uracil with 3,4-dihydroxy-2-butanone 4-phosphate. This is the penultimate step in the biosynthesis of riboflavin. The sequence is that of 6,7-dimethyl-8-ribityllumazine synthase from Geobacillus sp. (strain WCH70).